A 768-amino-acid chain; its full sequence is DNA ligase (768 aa).

A compositionally biased stretch (low complexity) spans 1-11 (MSPSAPANSAP). The tract at residues 1–28 (MSPSAPANSAPDPDRNGVPDVGPASAAP) is disordered. Residues 62–66 (DAEYD), 111–112 (SI), and Glu148 contribute to the NAD(+) site. Residue Lys150 is the N6-AMP-lysine intermediate of the active site. Positions 171, 238, 361, and 385 each coordinate NAD(+). Zn(2+) is bound by residues Cys484, Cys487, Cys502, and Cys508. The region spanning 670–759 (AAELPLAGKT…EADADADAEG (90 aa)) is the BRCT domain.

The protein belongs to the NAD-dependent DNA ligase family. LigA subfamily. Mg(2+) serves as cofactor. The cofactor is Mn(2+).

The enzyme catalyses NAD(+) + (deoxyribonucleotide)n-3'-hydroxyl + 5'-phospho-(deoxyribonucleotide)m = (deoxyribonucleotide)n+m + AMP + beta-nicotinamide D-nucleotide.. Functionally, DNA ligase that catalyzes the formation of phosphodiester linkages between 5'-phosphoryl and 3'-hydroxyl groups in double-stranded DNA using NAD as a coenzyme and as the energy source for the reaction. It is essential for DNA replication and repair of damaged DNA. The polypeptide is DNA ligase (Leptothrix cholodnii (strain ATCC 51168 / LMG 8142 / SP-6) (Leptothrix discophora (strain SP-6))).